Reading from the N-terminus, the 101-residue chain is Small ribosomal subunit protein uS14 (101 aa).

Residues 32 to 62 (GDAKRSDAEREAARLGLQKLPRNANPTRQRN) form a disordered region. The span at 33 to 44 (DAKRSDAEREAA) shows a compositional bias: basic and acidic residues.

This sequence belongs to the universal ribosomal protein uS14 family. Part of the 30S ribosomal subunit. Contacts proteins S3 and S10.

Functionally, binds 16S rRNA, required for the assembly of 30S particles and may also be responsible for determining the conformation of the 16S rRNA at the A site. This chain is Small ribosomal subunit protein uS14, found in Verminephrobacter eiseniae (strain EF01-2).